Here is a 186-residue protein sequence, read N- to C-terminus: EF-hand protein 5 (186 aa).

Residues 1–23 form a disordered region; that stretch reads MSRSKEVSPNLSQQKRGDVRSAG. 4 EF-hand domains span residues 41 to 76, 77 to 112, 113 to 148, and 149 to 186; these read SAEL…GLHT, SEEE…GIDE, ASIA…SGEH, and SSAE…LNKM. 3 residues coordinate Ca(2+): Glu-98, Asp-126, and Thr-130.

The chain is EF-hand protein 5 from Leishmania tarentolae (Sauroleishmania tarentolae).